A 67-amino-acid chain; its full sequence is Small ribosomal subunit protein eS17 (67 aa).

Belongs to the eukaryotic ribosomal protein eS17 family.

The chain is Small ribosomal subunit protein eS17 from Thermococcus sibiricus (strain DSM 12597 / MM 739).